Reading from the N-terminus, the 197-residue chain is MPITPATSTHSSSNGTAEAILLELVDENGTTIGTAEKLAAHQPPGQLHRAFSVFLFDEQGRLLLQQRALGKYHSPGVWSNTCCGHPYPGEAPFAAAARRTHEELGVSPSLLAEAGTVRYNHPDPDSGLVEQEFNHLFVGLVQSPLRPDAEEIGDTAFVTAAELAERHAKDPFSSWFMTVLDAARPAVRELTGPSAGW.

Residues histidine 41 and histidine 48 each coordinate Mn(2+). One can recognise a Nudix hydrolase domain in the interval 46-183; that stretch reads QLHRAFSVFL…SWFMTVLDAA (138 aa). Cysteine 83 is an active-site residue. Cysteine 83 is a Mg(2+) binding site. Histidine 85 serves as a coordination point for Mn(2+). Glutamate 103 is a binding site for Mg(2+). Mn(2+) is bound by residues glutamate 130 and glutamate 132. Residue glutamate 132 is part of the active site.

Belongs to the IPP isomerase type 1 family. Requires Mg(2+) as cofactor. It depends on Mn(2+) as a cofactor.

It is found in the cytoplasm. It carries out the reaction isopentenyl diphosphate = dimethylallyl diphosphate. It participates in isoprenoid biosynthesis; dimethylallyl diphosphate biosynthesis; dimethylallyl diphosphate from isopentenyl diphosphate: step 1/1. Its function is as follows. Catalyzes the 1,3-allylic rearrangement of the homoallylic substrate isopentenyl (IPP) to its highly electrophilic allylic isomer, dimethylallyl diphosphate (DMAPP). The protein is Isopentenyl-diphosphate Delta-isomerase of Streptomyces avermitilis (strain ATCC 31267 / DSM 46492 / JCM 5070 / NBRC 14893 / NCIMB 12804 / NRRL 8165 / MA-4680).